A 283-amino-acid chain; its full sequence is Pantothenate synthetase (283 aa).

Residue 30–37 (MGALHEGH) coordinates ATP. The active-site Proton donor is the H37. Q61 serves as a coordination point for (R)-pantoate. Residue Q61 coordinates beta-alanine. Position 147 to 150 (147 to 150 (GEKD)) interacts with ATP. Q153 provides a ligand contact to (R)-pantoate. ATP contacts are provided by residues I176 and 184–187 (VSSR).

Belongs to the pantothenate synthetase family. As to quaternary structure, homodimer.

It is found in the cytoplasm. The catalysed reaction is (R)-pantoate + beta-alanine + ATP = (R)-pantothenate + AMP + diphosphate + H(+). It functions in the pathway cofactor biosynthesis; (R)-pantothenate biosynthesis; (R)-pantothenate from (R)-pantoate and beta-alanine: step 1/1. Its function is as follows. Catalyzes the condensation of pantoate with beta-alanine in an ATP-dependent reaction via a pantoyl-adenylate intermediate. This is Pantothenate synthetase from Pelodictyon phaeoclathratiforme (strain DSM 5477 / BU-1).